Reading from the N-terminus, the 373-residue chain is STE20-related kinase adapter protein alpha (373 aa).

Positions 11–321 (YELLTVIGKG…ASTLLNHSFF (311 aa)) constitute a Protein kinase domain. Residues 255–281 (STSRSAANSGLSESLAPSTPRTSNGDS) show a composition bias toward polar residues. Residues 255 to 288 (STSRSAANSGLSESLAPSTPRTSNGDSPSHPYHR) are disordered. A Phosphothreonine; by LKB1 modification is found at threonine 361.

It belongs to the protein kinase superfamily. STE Ser/Thr protein kinase family. STE20 subfamily. Component of a trimeric complex composed of STK11/LKB1, STRAD (STRADA or STRADB) and CAB39/MO25 (CAB39/MO25alpha or CAB39L/MO25beta): the complex tethers STK11/LKB1 in the cytoplasm and stimulates its catalytic activity.

Its subcellular location is the nucleus. It is found in the cytoplasm. In terms of biological role, pseudokinase which, in complex with CAB39/MO25 (CAB39/MO25alpha or CAB39L/MO25beta), binds to and activates STK11/LKB1. Adopts a closed conformation typical of active protein kinases and binds STK11/LKB1 as a pseudosubstrate, promoting conformational change of STK11/LKB1 in an active conformation. The protein is STE20-related kinase adapter protein alpha (STRADA) of Bos taurus (Bovine).